A 547-amino-acid polypeptide reads, in one-letter code: Mitogen-activated protein kinase 15 (547 aa).

The segment at 1-20 is ubiquitin-conjugating; sequence MCAAEVDRHVSQRYLIKRRL. Positions 14–305 constitute a Protein kinase domain; it reads YLIKRRLGKG…AEQALQHPYV (292 aa). ATP is bound by residues 20 to 28 and K43; that span reads LGKGAYGIV. Catalysis depends on D138, which acts as the Proton acceptor. Position 176 is a phosphothreonine (T176). The TXY signature appears at 176 to 178; it reads TEY. Y178 carries the phosphotyrosine modification. The segment at 266–286 is necessary to interact with ESRRA, to regulate its subcellular localization and to inhibit its transcriptional activity; that stretch reads LDALLPPDTPPEALDLLKRLL. A requires for interaction with GABARAP, MAP1LC3B AND GABARAPL1 region spans residues 301–380; sequence QHPYVQRFHC…SQRQSLKPGV (80 aa). The segment at 370–503 is disordered; the sequence is ASQRQSLKPG…EAPEPRPGRR (134 aa). 2 PXXXP motif repeats span residues 378-382 and 385-389; these read PGVLP and LAETP. PXXXP motif; regulates binding with chromatin and interaction with PCNA repeat units follow at residues 393–397 and 401–405; these read RGPKP and HGHDP. Residues 401–414 show a composition bias toward basic and acidic residues; the sequence is HGHDPEHVEVRRQS. R449 carries the post-translational modification Omega-N-methylarginine. Polar residues predominate over residues 454 to 465; that stretch reads SLTSQAAAQAAN. The span at 481–490 shows a compositional bias: low complexity; the sequence is AVGARRVPSR. Residues 491-500 are compositionally biased toward basic and acidic residues; sequence LPREAPEPRP.

It belongs to the protein kinase superfamily. CMGC Ser/Thr protein kinase family. MAP kinase subfamily. In terms of assembly, interacts with CSK/c-Src, ABL1, RET and TGFB1I1. Interacts with GABARAP, MAP1LC3B and GABARAPL1; controls, in a kinase-dependent fashion, both basal and starvation-induced autophagy. Interacts with ESRRA; promotes re-localization of ESRRA to the cytoplasm through a XPO1-dependent mechanism then inhibits ESRRA transcriptional activity. Interacts with PCNA; the interaction is chromatin binding- and kinase activity-dependent and prevents MDM2-mediated PCNA destruction by inhibiting the association of PCNA with MDM2. Interacts with DVL2. Interacts with CLIC3; MAPK15 does not phosphorylates CLIC3. Post-translationally, autophosphorylated on Thr-176 and Tyr-178; activates the enzyme. In terms of processing, dephosphorylated by PTPN1. Ubiquitinated. Ubiquitination may allow its tight kinase activity regulation and rapid turnover. May be ubiquitinated by a SCF E3 ligase. In terms of tissue distribution, ubiquitously expressed at a weak level. Highest expression is found in testis and to a lower extent in lung.

Its subcellular location is the cytoplasm. It is found in the cytoskeleton. The protein localises to the cilium basal body. The protein resides in the cell junction. It localises to the tight junction. Its subcellular location is the microtubule organizing center. It is found in the centrosome. The protein localises to the centriole. The protein resides in the cytoplasmic vesicle. It localises to the autophagosome. Its subcellular location is the golgi apparatus. It is found in the nucleus. The protein localises to the spindle. It catalyses the reaction L-seryl-[protein] + ATP = O-phospho-L-seryl-[protein] + ADP + H(+). The catalysed reaction is L-threonyl-[protein] + ATP = O-phospho-L-threonyl-[protein] + ADP + H(+). With respect to regulation, activated by threonine and tyrosine phosphorylation. Inhibited by dual specificity phosphatases, such as DUSP1. Phosphorylation and activation in response to DNA damaging agents, serum stimulation. Constitutively activated when phosphorylated on Tyr-178. Activity depends on the relative rates of MAPK15 autophosphorylation and dephosphorylation by PTPN1. Functionally, atypical MAPK protein that regulates several process such as autophagy, ciliogenesis, protein trafficking/secretion and genome integrity, in a kinase activity-dependent manner. Controls both, basal and starvation-induced autophagy throught its interaction with GABARAP, MAP1LC3B and GABARAPL1 leading to autophagosome formation, SQSTM1 degradation and reduced MAP1LC3B inhibitory phosphorylation. Regulates primary cilium formation and the localization of ciliary proteins involved in cilium structure, transport, and signaling. Prevents the relocation of the sugar-adding enzymes from the Golgi to the endoplasmic reticulum, thereby restricting the production of sugar-coated proteins. Upon amino-acid starvation, mediates transitional endoplasmic reticulum site disassembly and inhibition of secretion. Binds to chromatin leading to MAPK15 activation and interaction with PCNA, that which protects genomic integrity by inhibiting MDM2-mediated degradation of PCNA. Regulates DA transporter (DAT) activity and protein expression via activation of RhoA. In response to H(2)O(2) treatment phosphorylates ELAVL1, thus preventing it from binding to the PDCD4 3'UTR and rendering the PDCD4 mRNA accessible to miR-21 and leading to its degradation and loss of protein expression. Also functions in a kinase activity-independent manner as a negative regulator of growth. Phosphorylates in vitro FOS and MBP. During oocyte maturation, plays a key role in the microtubule organization and mei- otic cell cycle progression in oocytes, fertilized eggs, and early embryos. Interacts with ESRRA promoting its re-localization from the nucleus to the cytoplasm and then prevents its transcriptional activity. This chain is Mitogen-activated protein kinase 15 (Mapk15), found in Rattus norvegicus (Rat).